A 499-amino-acid polypeptide reads, in one-letter code: Probable lipid II flippase MurJ (499 aa).

A run of 14 helical transmembrane segments spans residues 4–24 (LFRA…FGYV), 26–46 (DATV…FIAF), 88–108 (LLIT…EEII), 130–150 (FTIL…ILLV), 154–174 (FFVP…SLVI), 184–204 (LALA…FLLF), 227–247 (FLFT…DTFL), 265–285 (IYLL…LALV), 297–317 (TALK…FFLS), 335–355 (LFYT…YSLQ), 375–395 (AFLS…LLNF), 396–416 (GVYS…VYLY), 425–445 (IPFG…GLVY), and 455–475 (FILV…LIIL).

It belongs to the MurJ/MviN family.

It is found in the cell inner membrane. Its pathway is cell wall biogenesis; peptidoglycan biosynthesis. In terms of biological role, involved in peptidoglycan biosynthesis. Transports lipid-linked peptidoglycan precursors from the inner to the outer leaflet of the cytoplasmic membrane. In Aquifex aeolicus (strain VF5), this protein is Probable lipid II flippase MurJ.